Reading from the N-terminus, the 206-residue chain is FMN-dependent NADH:quinone oxidoreductase (206 aa).

Residues serine 10 and 15 to 17 (SVS) contribute to the FMN site.

It belongs to the azoreductase type 1 family. Homodimer. It depends on FMN as a cofactor.

It catalyses the reaction 2 a quinone + NADH + H(+) = 2 a 1,4-benzosemiquinone + NAD(+). The catalysed reaction is N,N-dimethyl-1,4-phenylenediamine + anthranilate + 2 NAD(+) = 2-(4-dimethylaminophenyl)diazenylbenzoate + 2 NADH + 2 H(+). In terms of biological role, quinone reductase that provides resistance to thiol-specific stress caused by electrophilic quinones. Its function is as follows. Also exhibits azoreductase activity. Catalyzes the reductive cleavage of the azo bond in aromatic azo compounds to the corresponding amines. This is FMN-dependent NADH:quinone oxidoreductase from Acidobacterium capsulatum (strain ATCC 51196 / DSM 11244 / BCRC 80197 / JCM 7670 / NBRC 15755 / NCIMB 13165 / 161).